The following is a 1050-amino-acid chain: Probable efflux pump membrane transporter TtgB (1050 aa).

Helical transmembrane passes span 10 to 30 (IFAWVIALVIMLVGALSILKL), 339 to 359 (GVIHTLIEAVVLVFLVMYLFL), 370 to 390 (MTVPVVLLGTFGILAAAGFSI), 393 to 413 (LTMFAMVLAIGLLVDDAIVVV), 440 to 460 (GALVGIALVLSAVLLPMAFFG), 472 to 492 (ITIVSAMGLSVLVALIFTPAL), 539 to 559 (VPFLLAYALIVVGMIWLFARI), 871 to 891 (MPALFALSVLFVFLCLAALYE), 893 to 913 (WSIPIAVVLVVPLGIIGALIA), 923 to 943 (VYFLVGLLTTIGLAAKNAILI), 972 to 992 (IIMTSLAFILGVVPLTIASGA), and 1004 to 1024 (VIGGMISATVLAIFWVPLFFV).

Belongs to the resistance-nodulation-cell division (RND) (TC 2.A.6) family.

Its subcellular location is the cell inner membrane. Probable membrane transporter component of the TtgABC efflux pump with unknown specificity. In Pseudomonas putida (strain ATCC 47054 / DSM 6125 / CFBP 8728 / NCIMB 11950 / KT2440), this protein is Probable efflux pump membrane transporter TtgB (ttgB).